The sequence spans 404 residues: NADH-quinone oxidoreductase subunit D 2 (404 aa).

The protein belongs to the complex I 49 kDa subunit family. As to quaternary structure, NDH-1 is composed of 14 different subunits. Subunits NuoB, C, D, E, F, and G constitute the peripheral sector of the complex.

Its subcellular location is the cell inner membrane. It carries out the reaction a quinone + NADH + 5 H(+)(in) = a quinol + NAD(+) + 4 H(+)(out). Its function is as follows. NDH-1 shuttles electrons from NADH, via FMN and iron-sulfur (Fe-S) centers, to quinones in the respiratory chain. The immediate electron acceptor for the enzyme in this species is believed to be ubiquinone. Couples the redox reaction to proton translocation (for every two electrons transferred, four hydrogen ions are translocated across the cytoplasmic membrane), and thus conserves the redox energy in a proton gradient. This chain is NADH-quinone oxidoreductase subunit D 2, found in Rhizobium meliloti (strain 1021) (Ensifer meliloti).